The sequence spans 660 residues: MTHSHAQLVWQDGQPMSAVFGDVYFSRASGLEETRHVFLRHNQLEERFAALPPSGSFAIAETGFGTGLNFLCAWQCFEARAPAGARLHFVSAEKFPLTPSDLAQALALWPELEPWSSQLLAQYDVLTPGWHRFVLAGGRVTLTLMIGDVLEVLPQLDARVDAWFLDGFAPSKNPDMWQQALFEQMARLSGPGASFATFTSAGAVRRGLAGAGFEVRKAPGHGAKRHISHGWIATPPDAGWQAPWYARPEPRWRERSAIVVGGGLAGAASARSLALRGWQVTLIERMPQLASAASGNPQGVLYTKLSPHLTPLTRLVLSGYAYSLRALRCLLPEDGDWQACGVLQLAHDGKEAEKQQALAELNLPESVMRPLDRDAASELAGTDLPCGGLFFPQGGWVHPPALVRQLADHPNIVIKTGRTALTLDYDPAQRSWTAGDEQGPLAVASVVVLAGAAETAQFDSTRHLPLKKIRGQITSIPASEESSRLRTVLCGEGYISPARGGRHCLGATFKFDTDDLGVNDGEHAENLAMLAELAPSLRASLDRDAPEHLDGRAAFRCTSPDYLPLVGPAVAARDFVHAYRELARDATLRPATACPWAEGLYVNAAHGSRGLITAPLSGEILASLLEGEPAPLPADLMRAVHPSRFLLRDLIRRKLDPDAL.

The interval Met-1–Ala-233 is tRNA (mnm(5)s(2)U34)-methyltransferase. The tract at residues Val-260 to Leu-660 is FAD-dependent cmnm(5)s(2)U34 oxidoreductase.

In the N-terminal section; belongs to the methyltransferase superfamily. tRNA (mnm(5)s(2)U34)-methyltransferase family. This sequence in the C-terminal section; belongs to the DAO family. Requires FAD as cofactor.

The protein resides in the cytoplasm. It carries out the reaction 5-aminomethyl-2-thiouridine(34) in tRNA + S-adenosyl-L-methionine = 5-methylaminomethyl-2-thiouridine(34) in tRNA + S-adenosyl-L-homocysteine + H(+). Its function is as follows. Catalyzes the last two steps in the biosynthesis of 5-methylaminomethyl-2-thiouridine (mnm(5)s(2)U) at the wobble position (U34) in tRNA. Catalyzes the FAD-dependent demodification of cmnm(5)s(2)U34 to nm(5)s(2)U34, followed by the transfer of a methyl group from S-adenosyl-L-methionine to nm(5)s(2)U34, to form mnm(5)s(2)U34. The protein is tRNA 5-methylaminomethyl-2-thiouridine biosynthesis bifunctional protein MnmC of Chromobacterium violaceum (strain ATCC 12472 / DSM 30191 / JCM 1249 / CCUG 213 / NBRC 12614 / NCIMB 9131 / NCTC 9757 / MK).